Here is a 93-residue protein sequence, read N- to C-terminus: MPRSLKKGPFVDDHLQKKVDAQNEAGTHNVIRTWSRRSVVTPDFLGHTFAVHDGRKHTPVFVTESMVGHKLGEFAPTRTFKGHEKDDRKGRRR.

2 disordered regions span residues 1–24 (MPRSLKKGPFVDDHLQKKVDAQNE) and 73–93 (EFAPTRTFKGHEKDDRKGRRR). Composition is skewed to basic and acidic residues over residues 9-21 (PFVDDHLQKKVDA) and 81-93 (KGHEKDDRKGRRR).

It belongs to the universal ribosomal protein uS19 family.

Functionally, protein S19 forms a complex with S13 that binds strongly to the 16S ribosomal RNA. The sequence is that of Small ribosomal subunit protein uS19 from Kineococcus radiotolerans (strain ATCC BAA-149 / DSM 14245 / SRS30216).